Reading from the N-terminus, the 184-residue chain is Ribosome-recycling factor (184 aa).

The protein belongs to the RRF family.

The protein localises to the cytoplasm. In terms of biological role, responsible for the release of ribosomes from messenger RNA at the termination of protein biosynthesis. May increase the efficiency of translation by recycling ribosomes from one round of translation to another. The polypeptide is Ribosome-recycling factor (Fervidobacterium nodosum (strain ATCC 35602 / DSM 5306 / Rt17-B1)).